We begin with the raw amino-acid sequence, 138 residues long: Large ribosomal subunit protein uL16c (138 aa).

Belongs to the universal ribosomal protein uL16 family. In terms of assembly, part of the 50S ribosomal subunit.

The protein localises to the plastid. Its subcellular location is the chloroplast. The protein is Large ribosomal subunit protein uL16c of Physcomitrium patens (Spreading-leaved earth moss).